A 749-amino-acid polypeptide reads, in one-letter code: MAGLGRLDPGPRTVMPAWKREILERRRAKLAALSGGQGSGAAPDGPNERLVLAESLGPLSQNPFMRLESERRRGTRPAQQLLELYCRVPGVRTIRADNILIIESAPGFPPAVPPAAGIRAAEVVVYEAPQPGRVSRLLEKFDSPAAPCRRGSPERFRPALPQLPVASASAATRTPTNRSLAPASPVRLSQPAPPISPVPVAQRAGQRSACCEPAHPDGTAGPGARRSDFLQKTGSNSFTVHPRGLPRSAVNRSLSNGPMTQESPTGPANGLSGSPPVPGKWKPKVESKEPSLHPPPSPGTPSATSVGPPAFPAPSPASATPSQRQWVSSATSANDSFEIRPSSKPDMETIPIGDLQARALANLRVNSRNSFVLIPKRKAPGNYPLAGRQFEEPKGEVGWASQSQGLGSQLVSTVDGAPALEKSPLAAEMQWAVRKGACPRPAISDTDKCVRWQRPASPPPFLPATAEAEPAEGLGVPGLAKNGQEPVRPGLPVTFIDEVDSEEEAFQEAKLPSSAVGVPSQYHLHPARPGHTSELLNRGSNTFTVVPKRKPGTLQEPHLSQTNGQSQQGAEEQDAESLSGPHTTLENTLKKRYPTVHEIEVIGGYLALQKSCLIKAGSSRKKMKISFNDKSLHTTFEYPSESSLAQEEAEEEEEEEGEEDGEEEEVGPDSEKPFTVFLPRATFVSSVGPESSSGLSSYTPKHSMAFSKWQEQTLVQTPTDVELPPKEVMLTPASQNDLSDFRSEPALYF.

The segment at 144–348 (PAAPCRRGSP…IRPSSKPDME (205 aa)) is disordered. Composition is skewed to polar residues over residues 169-179 (SAATRTPTNRS), 230-239 (LQKTGSNSFT), and 250-266 (VNRS…SPTG). A Phosphoserine modification is found at Ser-274. Over residues 323 to 335 (QRQWVSSATSAND) the composition is skewed to polar residues. Over residues 337 to 347 (FEIRPSSKPDM) the composition is skewed to basic and acidic residues. Phosphoserine occurs at positions 401, 457, and 501. 3 disordered regions span residues 502 to 586 (EEEA…TTLE), 636 to 673 (FEYP…SEKP), and 730 to 749 (LTPA…ALYF). Polar residues-rich tracts occupy residues 534–544 (ELLNRGSNTFT) and 558–570 (HLSQ…QQGA). Residues 647–668 (EEAEEEEEEEGEEDGEEEEVGP) show a composition bias toward acidic residues.

Belongs to the taperin family. In terms of assembly, interacts with GRXCR2; the interaction restricts TPRN to the stereocilum basal region. Interacts with actin ACTB; the interaction may stabilize stereocilia. Interacts with CLIC5. Interacts with PTPRQ. TPRN, CLIC5 and PTPQR form concentric rings at the base of stereocilia and may form a complex. Interacts with phosphatase PPP1CA; the interaction results in inhibition of PPP1CA phosphatase activity. Interacts with DNA damage response proteins XRCC6/KU70, XRCC5/KU80, PARP1, TOP1 and TOP2A; these interactions recruit TPRN to sites of DNA damage where it may play a role in DNA repair. As to expression, in the organ of Corti, expressed in the inner ear hair cell stereocilia and the supporting cells (at protein level). Expressed in the sensory epithelia of the organ of Corti and vestibular end organs and, to a lesser extent, in Reisner's membrane and the spiral ligament (at protein level). At postnatal day 2, expression is detected in cochlea, liver, brain, kidney, heart and lung.

The protein resides in the cell projection. Its subcellular location is the stereocilium. The protein localises to the microvillus. It is found in the nucleus. It localises to the nucleoplasm. The protein resides in the cytoplasm. Functionally, essential for hearing. Required for maintenance of stereocilia on both inner and outer hair cells. Necessary for the integrity of the stereociliary rootlet. May act as an actin cytoskeleton regulator involved in the regulation of actin dynamics at the pointed end in hair cells. Forms rings at the base of stereocilia and binds actin filaments in the stereocilia which may stabilize the stereocilia. Acts as a strong inhibitor of PPP1CA phosphatase activity. Recruited to sites of DNA damage and may play a role in DNA damage repair. This chain is Taperin (Tprn), found in Mus musculus (Mouse).